A 303-amino-acid polypeptide reads, in one-letter code: Porphobilinogen deaminase (303 aa).

C235 is subject to S-(dipyrrolylmethanemethyl)cysteine.

It belongs to the HMBS family. In terms of assembly, monomer. Requires dipyrromethane as cofactor.

The catalysed reaction is 4 porphobilinogen + H2O = hydroxymethylbilane + 4 NH4(+). Its pathway is porphyrin-containing compound metabolism; protoporphyrin-IX biosynthesis; coproporphyrinogen-III from 5-aminolevulinate: step 2/4. In terms of biological role, tetrapolymerization of the monopyrrole PBG into the hydroxymethylbilane pre-uroporphyrinogen in several discrete steps. The chain is Porphobilinogen deaminase from Campylobacter fetus subsp. fetus (strain 82-40).